The sequence spans 610 residues: Sodium-coupled monocarboxylate transporter 1 (610 aa).

The Extracellular portion of the chain corresponds to M1 to T9. The chain crosses the membrane as a helical span at residues F10–I30. Residues Y31 to R51 lie on the Cytoplasmic side of the membrane. A helical membrane pass occupies residues M52–L72. Over G73–A83 the chain is Extracellular. The helical transmembrane segment at I84–L104 threads the bilayer. Residues P105–T132 lie on the Cytoplasmic side of the membrane. Residues V133–A153 form a helical membrane-spanning segment. Residues L154 to D161 lie on the Extracellular side of the membrane. The chain crosses the membrane as a helical span at residues L162–L182. Topologically, residues K183 to D189 are cytoplasmic. The helical transmembrane segment at V190–M210 threads the bilayer. Residues Q211–R239 lie on the Extracellular side of the membrane. Residues H240 to N260 traverse the membrane as a helical segment. The Cytoplasmic portion of the chain corresponds to Q261–S279. Residues L280–A300 traverse the membrane as a helical segment. Residues L301–G336 lie on the Extracellular side of the membrane. Residues L337–A359 traverse the membrane as a helical segment. At L360–S389 the chain is on the cytoplasmic side. The chain crosses the membrane as a helical span at residues V390 to L410. Residues Q411–S415 are Extracellular-facing. Residues V416–F436 form a helical membrane-spanning segment. At A437–S439 the chain is on the cytoplasmic side. A helical transmembrane segment spans residues I440–A460. The Extracellular segment spans residues Q461–S518. The N-linked (GlcNAc...) asparagine glycan is linked to N485. A helical transmembrane segment spans residues L519 to V539. Residues S540 to L610 are Cytoplasmic-facing. The segment at G585–L610 is disordered. The segment covering E596–L610 has biased composition (polar residues). Positions T608–L610 match the PDZ-binding motif.

The protein belongs to the sodium:solute symporter (SSF) (TC 2.A.21) family. As to quaternary structure, interacts (via PDZ-binding motif) with PDZK1 (via PDZ domains 1 and 3); interaction increases nicotinate transport activity of SLC5A8. As to expression, expressed in normal thyroid, localized at the apical pole of thyroid cells facing the colloid lumen, but expression profoundly decreased in thyroid carcinomas. Expressed in normal colon but absent in colon aberrant crypt foci and colon cancers. Present in normal kidney cortex, brain, prostate, gastric mucosa and breast tissue but was significantly down-regulated in primary gliomas, gastric cancer, prostate tumors and breast tumors.

Its subcellular location is the apical cell membrane. It catalyses the reaction (S)-lactate(out) + 2 Na(+)(out) = (S)-lactate(in) + 2 Na(+)(in). It carries out the reaction propanoate(out) + 2 Na(+)(out) = propanoate(in) + 2 Na(+)(in). The catalysed reaction is pyruvate(out) + 2 Na(+)(out) = pyruvate(in) + 2 Na(+)(in). The enzyme catalyses acetate(out) + 2 Na(+)(out) = acetate(in) + 2 Na(+)(in). It catalyses the reaction butanoate(out) + 2 Na(+)(out) = butanoate(in) + 2 Na(+)(in). It carries out the reaction nicotinate(out) + 2 Na(+)(out) = nicotinate(in) + 2 Na(+)(in). The catalysed reaction is (R)-3-hydroxybutanoate(out) + 2 Na(+)(out) = (R)-3-hydroxybutanoate(in) + 2 Na(+)(in). The enzyme catalyses acetoacetate(out) + 2 Na(+)(out) = acetoacetate(in) + 2 Na(+)(in). It catalyses the reaction 4-methyl-2-oxopentanoate(out) + 2 Na(+)(out) = 4-methyl-2-oxopentanoate(in) + 2 Na(+)(in). It carries out the reaction 5-oxo-L-proline(out) + 2 Na(+)(out) = 5-oxo-L-proline(in) + 2 Na(+)(in). The catalysed reaction is iodide(out) = iodide(in). The enzyme catalyses chloride(in) = chloride(out). It catalyses the reaction nitrate(in) = nitrate(out). It carries out the reaction bromide(in) = bromide(out). With respect to regulation, increase of iodide influx inhibited by addition of perchlorate (NaClO(4)), a competitive inhibitor of iodide uptake catalyzed by sodium iodide symporter (NIS). Cotransport of monocarboxylates and nicotinate strongly inhibited by probenecid, nonsteroid anti-inflammatory drugs (ibuprofen, fenoprofen, ketprofen, naproxen) in a Na(+)-dependent manner or by prolonged exposure to external concentrations of monocarboxylates. Its function is as follows. Acts as an electrogenic sodium (Na(+)) and chloride (Cl-)-dependent sodium-coupled solute transporter, including transport of monocarboxylates (short-chain fatty acids including L-lactate, D-lactate, pyruvate, acetate, propionate, valerate and butyrate), mocarboxylate drugs (nicotinate, benzoate, salicylate and 5-aminosalicylate) and ketone bodies (beta-D-hydroxybutyrate, acetoacetate and alpha-ketoisocaproate), with a Na(+):substrate stoichiometry of between 4:1 and 2:1. Catalyzes passive carrier mediated diffusion of iodide. Mediates iodide transport from the thyrocyte into the colloid lumen through the apical membrane. May be responsible for the absorption of D-lactate and monocarboxylate drugs from the intestinal tract. Acts as a tumor suppressor, suppressing colony formation in colon cancer, prostate cancer and glioma cell lines. May play a critical role in the entry of L-lactate and ketone bodies into neurons by a process driven by an electrochemical Na(+) gradient and hence contribute to the maintenance of the energy status and function of neurons. Mediates sodium-coupled electrogenic transport of pyroglutamate (5-oxo-L-proline). Can mediate the transport of chloride, bromide, iodide and nitrate ions when the external concentration of sodium ions is reduced. In Homo sapiens (Human), this protein is Sodium-coupled monocarboxylate transporter 1.